Here is a 423-residue protein sequence, read N- to C-terminus: Gamma-glutamyl phosphate reductase (423 aa).

The protein belongs to the gamma-glutamyl phosphate reductase family.

Its subcellular location is the cytoplasm. The enzyme catalyses L-glutamate 5-semialdehyde + phosphate + NADP(+) = L-glutamyl 5-phosphate + NADPH + H(+). It participates in amino-acid biosynthesis; L-proline biosynthesis; L-glutamate 5-semialdehyde from L-glutamate: step 2/2. Functionally, catalyzes the NADPH-dependent reduction of L-glutamate 5-phosphate into L-glutamate 5-semialdehyde and phosphate. The product spontaneously undergoes cyclization to form 1-pyrroline-5-carboxylate. The sequence is that of Gamma-glutamyl phosphate reductase from Paraburkholderia phytofirmans (strain DSM 17436 / LMG 22146 / PsJN) (Burkholderia phytofirmans).